Reading from the N-terminus, the 244-residue chain is 14-3-3 protein homolog 1 (244 aa).

It belongs to the 14-3-3 family.

The sequence is that of 14-3-3 protein homolog 1 from Echinococcus multilocularis (Fox tapeworm).